A 631-amino-acid chain; its full sequence is Phosphomethylpyrimidine synthase (631 aa).

Substrate is bound by residues N239, M268, Y297, H333, 353–355, 394–397, and E433; these read SRG and DGLR. H437 contacts Zn(2+). Y460 is a substrate binding site. H501 is a binding site for Zn(2+). [4Fe-4S] cluster is bound by residues C581, C584, and C589.

This sequence belongs to the ThiC family. Homodimer. [4Fe-4S] cluster is required as a cofactor.

It catalyses the reaction 5-amino-1-(5-phospho-beta-D-ribosyl)imidazole + S-adenosyl-L-methionine = 4-amino-2-methyl-5-(phosphooxymethyl)pyrimidine + CO + 5'-deoxyadenosine + formate + L-methionine + 3 H(+). It participates in cofactor biosynthesis; thiamine diphosphate biosynthesis. Its function is as follows. Catalyzes the synthesis of the hydroxymethylpyrimidine phosphate (HMP-P) moiety of thiamine from aminoimidazole ribotide (AIR) in a radical S-adenosyl-L-methionine (SAM)-dependent reaction. The sequence is that of Phosphomethylpyrimidine synthase from Salmonella paratyphi A (strain AKU_12601).